Reading from the N-terminus, the 469-residue chain is 3-isopropylmalate dehydratase large subunit (469 aa).

Cys349, Cys410, and Cys413 together coordinate [4Fe-4S] cluster.

Belongs to the aconitase/IPM isomerase family. LeuC type 1 subfamily. In terms of assembly, heterodimer of LeuC and LeuD. [4Fe-4S] cluster serves as cofactor.

It catalyses the reaction (2R,3S)-3-isopropylmalate = (2S)-2-isopropylmalate. It functions in the pathway amino-acid biosynthesis; L-leucine biosynthesis; L-leucine from 3-methyl-2-oxobutanoate: step 2/4. Catalyzes the isomerization between 2-isopropylmalate and 3-isopropylmalate, via the formation of 2-isopropylmaleate. The chain is 3-isopropylmalate dehydratase large subunit from Neisseria meningitidis serogroup A / serotype 4A (strain DSM 15465 / Z2491).